The sequence spans 185 residues: Elongation factor P (185 aa).

The protein belongs to the elongation factor P family.

It is found in the cytoplasm. It participates in protein biosynthesis; polypeptide chain elongation. Involved in peptide bond synthesis. Stimulates efficient translation and peptide-bond synthesis on native or reconstituted 70S ribosomes in vitro. Probably functions indirectly by altering the affinity of the ribosome for aminoacyl-tRNA, thus increasing their reactivity as acceptors for peptidyl transferase. This Clostridium perfringens (strain ATCC 13124 / DSM 756 / JCM 1290 / NCIMB 6125 / NCTC 8237 / Type A) protein is Elongation factor P.